Here is a 321-residue protein sequence, read N- to C-terminus: Phosphatidate cytidylyltransferase, mitochondrial (321 aa).

It belongs to the TAM41 family. The cofactor is Mg(2+). Co(2+) serves as cofactor. Requires Cu(2+) as cofactor.

The protein resides in the mitochondrion inner membrane. It carries out the reaction a 1,2-diacyl-sn-glycero-3-phosphate + CTP + H(+) = a CDP-1,2-diacyl-sn-glycerol + diphosphate. The protein operates within phospholipid metabolism; CDP-diacylglycerol biosynthesis; CDP-diacylglycerol from sn-glycerol 3-phosphate: step 3/3. Functionally, catalyzes the formation of CDP-diacylglycerol (CDP-DAG) from phosphatidic acid (PA) in the mitochondrial inner membrane. Required for the biosynthesis of the dimeric phospholipid cardiolipin, which stabilizes supercomplexes of the mitochondrial respiratory chain in the mitochondrial inner membrane. This Caenorhabditis briggsae protein is Phosphatidate cytidylyltransferase, mitochondrial.